A 254-amino-acid chain; its full sequence is Probable WRKY transcription factor 67 (254 aa).

The segment at residues 102–170 (SRTMCPNDGF…YLGKHVCKAF (69 aa)) is a DNA-binding region (WRKY).

Belongs to the WRKY group III family.

The protein localises to the nucleus. Its function is as follows. Transcription factor. Interacts specifically with the W box (5'-(T)TGAC[CT]-3'), a frequently occurring elicitor-responsive cis-acting element. This is Probable WRKY transcription factor 67 (WRKY67) from Arabidopsis thaliana (Mouse-ear cress).